A 351-amino-acid chain; its full sequence is Glycerol-3-phosphate dehydrogenase 1-like protein (351 aa).

12–17 (GSGNWG) serves as a coordination point for NAD(+). Lys122 lines the substrate pocket. Ala155 contributes to the NAD(+) binding site. Lys206 (proton acceptor) is an active-site residue. NAD(+) is bound by residues Arg271, Lys298, and Gln300. Substrate is bound at residue 271-272 (RN).

It belongs to the NAD-dependent glycerol-3-phosphate dehydrogenase family. In terms of assembly, interacts with SCN5A.

Its subcellular location is the cytoplasm. The catalysed reaction is sn-glycerol 3-phosphate + NAD(+) = dihydroxyacetone phosphate + NADH + H(+). Functionally, plays a role in regulating cardiac sodium current; decreased enzymatic activity with resulting increased levels of glycerol 3-phosphate activating the DPD1L-dependent SCN5A phosphorylation pathway, may ultimately lead to decreased sodium current; cardiac sodium current may also be reduced due to alterations of NAD(H) balance induced by DPD1L. The protein is Glycerol-3-phosphate dehydrogenase 1-like protein (Gpd1l) of Mus musculus (Mouse).